Consider the following 657-residue polypeptide: MPRYTVHVRGEWLAVPCQDGKLSVGWLGREAVRRYMKNKPDNGGFTSVDEVRFLVRRCKGLGLLDNEDLLEVALEDNEFVEVVIEGDVMSPDFIPSQPEGVFLYSKYREPEKYIALDGDSLSTEDLVNLGKGHYKIKLTSIAEKKVQQSREVIDSIIKERTVVYGITTGFGKFARTVIPANKLQELQVNLVRSHSSGVGKPLSPERCRMLLALRINVLAKGYSGISLETLKQVIEVFNASCLSYVPEKGTVGASGDLAPLSHLALGLIGEGKMWSPKSGWADAKYVLEAHGLKPIVLKPKEGLALINGTQMITSLGCEAVERASAIARQADIVAALTLEVLKGTTKAFDTDIHAVRPHRGQIEVAFRFRSLLDSDHHPSEIAESHRFCDRVQDAYTLRCCPQVHGVVNDTIAFVKDIITTELNSATDNPMVFASRGETISGGNFHGEYPAKALDYLAIGVHELAAISERRIERLCNPSLSELPAFLVAEGGLNSGFMIAHCTAAALVSESKALCHPSSVDSLSTSAATEDHVSMGGWAARKALRVIEHVEQVLAIELLAACQGIEFLRPLKTTTPLEKVYDLVRSVVRPWIKDRFMAPDIEAAHRLLLDQKVWEVAAPYIEKYRMEHIPESRPLSPTAFSLESLRKNSATIPESDDL.

Positions 253–255 form a cross-link, 5-imidazolinone (Ala-Gly); the sequence is ASG. 2,3-didehydroalanine (Ser) is present on S254. T396 carries the post-translational modification Phosphothreonine. S635 carries the post-translational modification Phosphoserine. T637 is modified (phosphothreonine). The residue at position 648 (S648) is a Phosphoserine.

Belongs to the PAL/histidase family. Post-translationally, contains an active site 4-methylidene-imidazol-5-one (MIO), which is formed autocatalytically by cyclization and dehydration of residues Ala-Ser-Gly. As to expression, liver and skin.

The catalysed reaction is L-histidine = trans-urocanate + NH4(+). It participates in amino-acid degradation; L-histidine degradation into L-glutamate; N-formimidoyl-L-glutamate from L-histidine: step 1/3. The chain is Histidine ammonia-lyase (Hal) from Rattus norvegicus (Rat).